The following is a 437-amino-acid chain: Enolase 2 (437 aa).

Positions 160 and 169 each coordinate substrate. Catalysis depends on E212, which acts as the Proton donor. Mg(2+) contacts are provided by D247, E296, and D321. Residues E296 and D321 each contribute to the substrate site. The active-site Proton acceptor is the K346. Residues 373-376 and K397 each bind substrate; that span reads SHRS.

It belongs to the enolase family. Homodimer. The cofactor is Mg(2+).

The protein resides in the cytoplasm. It catalyses the reaction (2R)-2-phosphoglycerate = phosphoenolpyruvate + H2O. The protein operates within carbohydrate degradation; glycolysis; pyruvate from D-glyceraldehyde 3-phosphate: step 4/5. The sequence is that of Enolase 2 (ENO2) from Candida glabrata (strain ATCC 2001 / BCRC 20586 / JCM 3761 / NBRC 0622 / NRRL Y-65 / CBS 138) (Yeast).